An 804-amino-acid chain; its full sequence is General transcription and DNA repair factor IIH helicase/translocase subunit XPB (804 aa).

2 disordered regions span residues 1-61 (MSLK…NSNE) and 220-255 (QSSK…KSSS). Acidic residues predominate over residues 14 to 36 (PDEDLEEYSDYSDVDNYGEEDDD). Low complexity-rich tracts occupy residues 47–60 (NNNK…TNSN) and 220–229 (QSSKQKSSKP). The span at 236–255 (EDKKDITNDSSKETAEKSSS) shows a compositional bias: basic and acidic residues. In terms of domain architecture, Helicase ATP-binding spans 335-497 (MFGNGRARSG…DLNFLIGPKM (163 aa)). 348 to 355 (LPCGAGKT) lines the ATP pocket. The DEVH box signature appears at 450 to 453 (DEVH). A Helicase C-terminal domain is found at 551–705 (QACQFLIDYH…KVITNLKGME (155 aa)). Disordered regions lie at residues 736–761 (DDGE…SSGS) and 782–804 (KQLK…TKRR). Over residues 784–793 (LKKDSKEHHA) the composition is skewed to basic and acidic residues. A compositionally biased stretch (basic residues) spans 794–804 (LFRKHLYTKRR).

The protein belongs to the helicase family. RAD25/XPB subfamily. As to quaternary structure, component of the 7-subunit TFIIH core complex composed of XPB/ptr8, XPD/rad15, ssl1, tfb1, tfb2, tfb4 and tfb5, which is active in NER. The core complex associates with the 3-subunit CTD-kinase module TFIIK composed of mcs2/cyclin H, mcs6/cdk7 and pmh1/tfb3 to form the 10-subunit holoenzyme (holo-TFIIH) active in transcription.

It localises to the nucleus. The catalysed reaction is Couples ATP hydrolysis with the unwinding of duplex DNA by translocating in the 3'-5' direction.. It catalyses the reaction ATP + H2O = ADP + phosphate + H(+). Probable ATP-dependent 3'-5' DNA helicase/translocase. Binds dsDNA rather than ssDNA, unzipping it in a translocase rather than classical helicase activity. Component of the general transcription and DNA repair factor IIH (TFIIH) core complex. When complexed to CDK-activating kinase (CAK), involved in RNA transcription by RNA polymerase II. Also involved in transcription-coupled nucleotide excision repair (NER) of damaged DNA. In NER, TFIIH acts by opening DNA around the lesion to allow the excision of the damaged oligonucleotide and its replacement by a new DNA fragment. The ATPase activity of XPB/ptr8, but not its helicase activity, is required for DNA opening. In transcription, TFIIH has an essential role in transcription initiation. When the pre-initiation complex (PIC) has been established, TFIIH is required for promoter opening and promoter escape. The ATP-dependent helicase activity of XPB/ptr8 is required for promoter escape but not for promoter opening. Plays a role in mRNA export. The polypeptide is General transcription and DNA repair factor IIH helicase/translocase subunit XPB (Schizosaccharomyces pombe (strain 972 / ATCC 24843) (Fission yeast)).